The sequence spans 107 residues: Flagellar hook-basal body complex protein FliE (107 aa).

This sequence belongs to the FliE family.

It is found in the bacterial flagellum basal body. This Cupriavidus pinatubonensis (strain JMP 134 / LMG 1197) (Cupriavidus necator (strain JMP 134)) protein is Flagellar hook-basal body complex protein FliE.